Consider the following 483-residue polypeptide: MFS-type transporter ppzB (483 aa).

The next 5 helical transmembrane spans lie at 18 to 38 (FILT…GILL), 62 to 82 (AFLA…GWAA), 96 to 116 (MFLV…LLVV), 149 to 169 (IGTI…LGGV), and 178 to 198 (AVFA…ALVI). Residue Asn-219 is glycosylated (N-linked (GlcNAc...) asparagine). Transmembrane regions (helical) follow at residues 281-301 (LAML…ATVP), 310-330 (FSSL…FALG), 344-364 (AAAT…GLPE), 374-394 (VALF…VTSP), 424-444 (FGFS…LGGF), and 453-473 (VMGA…FLFV).

Belongs to the major facilitator superfamily. TCR/Tet family.

The protein resides in the membrane. Its function is as follows. MFS-type transporter; part of the gene cluster that mediates the biosynthesis of pyrrolopyrazines, secondary metabolites showing insecticidal activity. Probably involved in the secretion of peramine and other pyrrolopyrazines. This Metarhizium rileyi (strain RCEF 4871) (Nomuraea rileyi) protein is MFS-type transporter ppzB.